Reading from the N-terminus, the 59-residue chain is Large ribosomal subunit protein uL30 (59 aa).

It belongs to the universal ribosomal protein uL30 family. As to quaternary structure, part of the 50S ribosomal subunit.

This is Large ribosomal subunit protein uL30 from Geobacter metallireducens (strain ATCC 53774 / DSM 7210 / GS-15).